Here is a 161-residue protein sequence, read N- to C-terminus: Ribosome maturation factor RimP (161 aa).

This sequence belongs to the RimP family.

It is found in the cytoplasm. In terms of biological role, required for maturation of 30S ribosomal subunits. The sequence is that of Ribosome maturation factor RimP from Pelobacter propionicus (strain DSM 2379 / NBRC 103807 / OttBd1).